We begin with the raw amino-acid sequence, 310 residues long: Coproporphyrin III ferrochelatase (310 aa).

Fe(2+) is bound by residues histidine 184 and glutamate 265.

It belongs to the ferrochelatase family.

It is found in the cytoplasm. The catalysed reaction is Fe-coproporphyrin III + 2 H(+) = coproporphyrin III + Fe(2+). Its pathway is porphyrin-containing compound metabolism; protoheme biosynthesis. Involved in coproporphyrin-dependent heme b biosynthesis. Catalyzes the insertion of ferrous iron into coproporphyrin III to form Fe-coproporphyrin III. This Limosilactobacillus reuteri (strain DSM 20016) (Lactobacillus reuteri) protein is Coproporphyrin III ferrochelatase.